Reading from the N-terminus, the 309-residue chain is MPKVRTKDLIEQFQLELVSGEEGIHRPIDTSDLSRPGIEMAGFFTYYPADRVQLLGKTELTFFDTLTNDQKQERMKALCTEETPCIIVTRNQDVPKELLQASRESGVPLLRSSQTTTRLSSRLTNYLEGKLAPTTAVHGVLVDVYGVGVLIIGQSGVGKSETALELVKRGHRLVADDSVEIRQEDEDTLVGSSPDLIEHLLEIRGLGIINVMTLFGAGAVRNYKRITLVINLEIWDQNKNYDRLGLDEEKMKIIDTELTKITLPVRPGRNLAVIIEVAAMNFRLKRMGVNAAQQFSERLMSAIELGNQE.

Active-site residues include His-138 and Lys-159. 153 to 160 (GQSGVGKS) lines the ATP pocket. Ser-160 is a Mg(2+) binding site. The Proton acceptor; for phosphorylation activity. Proton donor; for dephosphorylation activity role is filled by Asp-177. The segment at 201 to 210 (LEIRGLGIIN) is important for the catalytic mechanism of both phosphorylation and dephosphorylation. Glu-202 is a binding site for Mg(2+). Arg-243 is an active-site residue. Positions 264–269 (PVRPGR) are important for the catalytic mechanism of dephosphorylation.

Belongs to the HPrK/P family. Homohexamer. The cofactor is Mg(2+).

It catalyses the reaction [HPr protein]-L-serine + ATP = [HPr protein]-O-phospho-L-serine + ADP + H(+). The enzyme catalyses [HPr protein]-O-phospho-L-serine + phosphate + H(+) = [HPr protein]-L-serine + diphosphate. In terms of biological role, catalyzes the ATP- as well as the pyrophosphate-dependent phosphorylation of a specific serine residue in HPr, a phosphocarrier protein of the phosphoenolpyruvate-dependent sugar phosphotransferase system (PTS). HprK/P also catalyzes the pyrophosphate-producing, inorganic phosphate-dependent dephosphorylation (phosphorolysis) of seryl-phosphorylated HPr (P-Ser-HPr). The two antagonistic activities of HprK/P are regulated by several intracellular metabolites, which change their concentration in response to the absence or presence of rapidly metabolisable carbon sources (glucose, fructose, etc.) in the growth medium. Also phosphorylates/dephosphorylates the HPr-like catabolite repression protein crh on a specific serine residue. Therefore, by controlling the phosphorylation state of HPr and crh, HPrK/P is a sensor enzyme that plays a major role in the regulation of carbon metabolism and sugar transport: it mediates carbon catabolite repression (CCR), and regulates PTS-catalyzed carbohydrate uptake and inducer exclusion. The polypeptide is HPr kinase/phosphorylase (Bacillus cytotoxicus (strain DSM 22905 / CIP 110041 / 391-98 / NVH 391-98)).